The chain runs to 273 residues: MALIMKGKPVADAIYEELQPMTSLNLTLGIIKYKGSDAGGYLSGLSKAAQRLNVQLRVNEVEQFQELTQSVVVMGKDSQVHGILLLKPFPKEWNFRQASDLIPPEKDVDALHPVNLGKLAQGRGNLVPATPQAVLSILDFYNVLPLEGASALVIGRSEAVGLPAFLQLMQRNATVTVAHSRTKDLPSLSRQADLVVVAVGKPNFLTKDHVKEGAVVIDVGTNVLEDGKVVGDVDRENVEPLVRAITPVPGGVGSVTTACLFKNLFLCYQEQTR.

NADP(+) contacts are provided by residues 155-157 (GRS), Ser180, and Thr221.

It belongs to the tetrahydrofolate dehydrogenase/cyclohydrolase family. In terms of assembly, homodimer.

The catalysed reaction is (6R)-5,10-methylene-5,6,7,8-tetrahydrofolate + NADP(+) = (6R)-5,10-methenyltetrahydrofolate + NADPH. The enzyme catalyses (6R)-5,10-methenyltetrahydrofolate + H2O = (6R)-10-formyltetrahydrofolate + H(+). It participates in one-carbon metabolism; tetrahydrofolate interconversion. Its function is as follows. Catalyzes the oxidation of 5,10-methylenetetrahydrofolate to 5,10-methenyltetrahydrofolate and then the hydrolysis of 5,10-methenyltetrahydrofolate to 10-formyltetrahydrofolate. The protein is Bifunctional protein FolD of Coprothermobacter proteolyticus (strain ATCC 35245 / DSM 5265 / OCM 4 / BT).